We begin with the raw amino-acid sequence, 50 residues long: Large ribosomal subunit protein bL33 (50 aa).

It belongs to the bacterial ribosomal protein bL33 family.

The sequence is that of Large ribosomal subunit protein bL33 (rpmG) from Aquifex aeolicus (strain VF5).